Reading from the N-terminus, the 435-residue chain is Trigger factor (435 aa).

One can recognise a PPIase FKBP-type domain in the interval 163 to 248 (GDFVTFDFKG…IKEIKVKELP (86 aa)).

Belongs to the FKBP-type PPIase family. Tig subfamily.

It localises to the cytoplasm. It catalyses the reaction [protein]-peptidylproline (omega=180) = [protein]-peptidylproline (omega=0). In terms of biological role, involved in protein export. Acts as a chaperone by maintaining the newly synthesized protein in an open conformation. Functions as a peptidyl-prolyl cis-trans isomerase. This Citrifermentans bemidjiense (strain ATCC BAA-1014 / DSM 16622 / JCM 12645 / Bem) (Geobacter bemidjiensis) protein is Trigger factor.